Consider the following 582-residue polypeptide: Bifunctional lycopene cyclase/phytoene synthase (582 aa).

The tract at residues 1-261 (MNQNGTRLCY…VVLGLVGCDY (261 aa)) is lycopene beta-cyclase. Helical transmembrane passes span 34 to 54 (CTYT…FFTA), 59 to 79 (KICI…SYLI), 99 to 121 (IPIE…YCIF), 142 to 162 (YVVA…LLLG), 170 to 190 (LILV…YPFL), and 242 to 262 (ALFF…CDYA). Residues 268–582 (YESLSQPASD…LLSALVYRLE (315 aa)) are phytoene synthase.

This sequence in the N-terminal section; belongs to the lycopene beta-cyclase family. It in the C-terminal section; belongs to the phytoene/squalene synthase family.

The protein resides in the membrane. The enzyme catalyses all-trans-lycopene = gamma-carotene. It carries out the reaction gamma-carotene = all-trans-beta-carotene. It catalyses the reaction 2 (2E,6E,10E)-geranylgeranyl diphosphate = 15-cis-phytoene + 2 diphosphate. It functions in the pathway carotenoid biosynthesis; beta-carotene biosynthesis. The protein operates within carotenoid biosynthesis; phytoene biosynthesis; all-trans-phytoene from geranylgeranyl diphosphate: step 1/1. Its function is as follows. Bifunctional enzyme that catalyzes the reactions from geranylgeranyl diphosphate to phytoene (phytoene synthase) and lycopene to beta-carotene via the intermediate gamma-carotene (lycopene cyclase). The protein is Bifunctional lycopene cyclase/phytoene synthase of Aspergillus niger (strain ATCC MYA-4892 / CBS 513.88 / FGSC A1513).